Reading from the N-terminus, the 364-residue chain is DNA polymerase IV (364 aa).

The UmuC domain occupies 14 to 198 (IIHIDMDAFF…LPIEKFHGVG (185 aa)). Mg(2+)-binding residues include Asp-18 and Asp-116. Residue Glu-117 is part of the active site.

Belongs to the DNA polymerase type-Y family. As to quaternary structure, monomer. Mg(2+) serves as cofactor.

It localises to the cytoplasm. The enzyme catalyses DNA(n) + a 2'-deoxyribonucleoside 5'-triphosphate = DNA(n+1) + diphosphate. In terms of biological role, poorly processive, error-prone DNA polymerase involved in untargeted mutagenesis. Copies undamaged DNA at stalled replication forks, which arise in vivo from mismatched or misaligned primer ends. These misaligned primers can be extended by PolIV. Exhibits no 3'-5' exonuclease (proofreading) activity. May be involved in translesional synthesis, in conjunction with the beta clamp from PolIII. This is DNA polymerase IV from Streptococcus agalactiae serotype Ia (strain ATCC 27591 / A909 / CDC SS700).